The primary structure comprises 300 residues: MNRRTDADSWDPASSVGATATMVAASRARASRGPDALLDDRLAGPLVRAVGLQPLVRMIDGDTAVDDPPSSPRSLNEQIAVRTRYFDDFFTAAGAGGIRQAVILASGLDTRAYRLNWPSGMTVYEIDQPQVIEFKTRTLAEFGALPCPDHRPIGIDLREDWPSALRQRGFDAGQPTAWIAEGLLVYLPPEAQDRLFDNIAELSTPRSQVATEHFPDPNGFSGPRAQRLSERWHRMGMDLDMAELIYHGDRNTVIDYLADHGWRVRARTFEEMHAHNGFEPPDDEMMALFGGMSYVTGIRK.

Residues aspartate 127 and 156–157 contribute to the S-adenosyl-L-methionine site; that span reads DL.

The protein belongs to the UPF0677 family.

In terms of biological role, exhibits S-adenosyl-L-methionine-dependent methyltransferase activity. The chain is Putative S-adenosyl-L-methionine-dependent methyltransferase MUL_0817 from Mycobacterium ulcerans (strain Agy99).